Reading from the N-terminus, the 132-residue chain is Agouti-signaling protein (132 aa).

A signal peptide spans 1–22; that stretch reads MDVTRLLLATLLVFLCFFTACS. N-linked (GlcNAc...) asparagine glycosylation occurs at Asn-39. A disordered region spans residues 61-87; the sequence is QISRKEAEKKRSSKKEASMKKVARPRT. The span at 63-79 shows a compositional bias: basic and acidic residues; that stretch reads SRKEAEKKRSSKKEASM. 5 disulfide bridges follow: Cys-93-Cys-108, Cys-100-Cys-114, Cys-107-Cys-125, Cys-111-Cys-132, and Cys-116-Cys-123. The Agouti domain occupies 93–132; the sequence is CVATRDSCKPPAPACCDPCASCQCRFFRSACSCRVLSLNC.

It is found in the secreted. In terms of biological role, involved in the regulation of melanogenesis. The binding of ASP to MC1R precludes alpha-MSH initiated signaling and thus blocks production of cAMP, leading to a down-regulation of eumelanogenesis (brown/black pigment) and thus increasing synthesis of pheomelanin (yellow/red pigment). The polypeptide is Agouti-signaling protein (ASIP) (Macaca nigrescens (Gorontalo macaque)).